Reading from the N-terminus, the 218-residue chain is MPLPDTMFCAQQIHIPPELTDILKQFTKAAIRTQPADVLQWSAGYFSALSRGDPLPVKDRIEMPMATQKTDTGLTQGLLKVLHKQCSHKEYVDLADLEQKWKNLCLPVEKFRALLQLDPCEDKIEWIKFLALGCSMLGGSLNTAMKHLCEILTTDPEGGPARIPFGTFSYVYRYLSGLDSDIPESDTEAYLSSLKENAAARKNGMIGLSDFFVLKRKI.

Positions 17–46 constitute an RIIa domain; that stretch reads PELTDILKQFTKAAIRTQPADVLQWSAGYF.

It belongs to the ropporin family. In terms of assembly, component of the axonemal radial spoke complex 1 (RS1), at least composed of spoke head proteins RSPH1, RSPH3, RSPH9 and the cilia-specific component RSPH4A or sperm-specific component RSPH6A, spoke stalk proteins RSPH14, DNAJB13, DYDC1, ROPN1L and NME5, and the anchor protein IQUB. May interact with AKAP3. Interacts with FSCB; the interaction increases upon spermatozoa capacitation conditions. Interacts with CFAP61. Sumoylated, sumoylation decreases upon spermatozoa capacitation conditions.

Its subcellular location is the cell projection. It is found in the cilium. It localises to the flagellum. Its function is as follows. Functions as part of axonemal radial spoke complexes that play an important part in the motility of sperm and cilia. Important for male fertility. With ROPN1, involved in fibrous sheath integrity and sperm motility, plays a role in PKA-dependent signaling processes required for spermatozoa capacitation. This Bos taurus (Bovine) protein is Ropporin-1-like protein (ROPN1L).